The sequence spans 162 residues: F protein (162 aa).

A disordered region spans residues 1–23; that stretch reads MSTNPKPQRKKPNVTPTVAHRTS. The segment covering 14 to 23 has biased composition (polar residues); that stretch reads VTPTVAHRTS.

It is found in the host cytoplasm. The protein localises to the host perinuclear region. Its function is as follows. Contributes to the RIGI-mediated inhibition of type I interferon production. The chain is F protein from Homo sapiens (Human).